Reading from the N-terminus, the 272-residue chain is Orotidine 5'-phosphate decarboxylase (272 aa).

Catalysis depends on lysine 95, which acts as the Proton donor.

The protein belongs to the OMP decarboxylase family. Type 2 subfamily.

The enzyme catalyses orotidine 5'-phosphate + H(+) = UMP + CO2. Its pathway is pyrimidine metabolism; UMP biosynthesis via de novo pathway; UMP from orotate: step 2/2. The protein is Orotidine 5'-phosphate decarboxylase of Cupriavidus necator (strain ATCC 17699 / DSM 428 / KCTC 22496 / NCIMB 10442 / H16 / Stanier 337) (Ralstonia eutropha).